Reading from the N-terminus, the 351-residue chain is Aromatic amino acid aminotransferase (351 aa).

N6-(pyridoxal phosphate)lysine is present on lysine 215.

It belongs to the class-II pyridoxal-phosphate-dependent aminotransferase family. As to quaternary structure, homodimer. Requires pyridoxal 5'-phosphate as cofactor.

It catalyses the reaction an aromatic L-alpha-amino acid + 2-oxoglutarate = an aromatic oxo-acid + L-glutamate. In terms of biological role, aminotransferase that catalyzes the conversion of aromatic amino acids and 2-oxoglutarate into corresponding aromatic oxo acids and L-glutamate. The sequence is that of Aromatic amino acid aminotransferase from Mycolicibacterium vanbaalenii (strain DSM 7251 / JCM 13017 / BCRC 16820 / KCTC 9966 / NRRL B-24157 / PYR-1) (Mycobacterium vanbaalenii).